Reading from the N-terminus, the 229-residue chain is Heptaprenylglyceryl phosphate synthase (229 aa).

Sn-glycerol 1-phosphate is bound at residue lysine 12. Residues aspartate 14 and serine 40 each contribute to the Mg(2+) site. Sn-glycerol 1-phosphate contacts are provided by residues tyrosine 159–glycine 164, glycine 189, and glycine 209–asparagine 210.

It belongs to the GGGP/HepGP synthase family. Group I subfamily. In terms of assembly, homodimer. It depends on Mg(2+) as a cofactor.

It carries out the reaction sn-glycerol 1-phosphate + all-trans-heptaprenyl diphosphate = 3-heptaprenyl-sn-glycero-1-phosphate + diphosphate. Its pathway is membrane lipid metabolism; glycerophospholipid metabolism. In terms of biological role, prenyltransferase that catalyzes in vivo the transfer of the heptaprenyl moiety of heptaprenyl pyrophosphate (HepPP; 35 carbon atoms) to the C3 hydroxyl of sn-glycerol-1-phosphate (G1P), producing heptaprenylglyceryl phosphate (HepGP). This reaction is an ether-bond-formation step in the biosynthesis of archaea-type G1P-based membrane lipids found in Bacillales. This is Heptaprenylglyceryl phosphate synthase from Bacillus cereus (strain ATCC 14579 / DSM 31 / CCUG 7414 / JCM 2152 / NBRC 15305 / NCIMB 9373 / NCTC 2599 / NRRL B-3711).